The primary structure comprises 445 residues: Argininosuccinate synthase (445 aa).

Residues 17–25 and Ala-43 contribute to the ATP site; that span reads AFSGGLDTS. Tyr-99 is an L-citrulline binding site. Residues Gly-129 and Thr-131 each coordinate ATP. L-aspartate contacts are provided by Thr-131, Asn-135, and Asp-136. Asn-135 contacts L-citrulline. Asp-136 serves as a coordination point for ATP. L-citrulline contacts are provided by Arg-139 and Ser-192. Position 194 (Asp-194) interacts with ATP. Positions 201, 203, and 280 each coordinate L-citrulline.

This sequence belongs to the argininosuccinate synthase family. Type 2 subfamily. In terms of assembly, homotetramer.

Its subcellular location is the cytoplasm. It carries out the reaction L-citrulline + L-aspartate + ATP = 2-(N(omega)-L-arginino)succinate + AMP + diphosphate + H(+). The protein operates within amino-acid biosynthesis; L-arginine biosynthesis; L-arginine from L-ornithine and carbamoyl phosphate: step 2/3. The protein is Argininosuccinate synthase of Ralstonia pickettii (strain 12J).